Here is a 418-residue protein sequence, read N- to C-terminus: Gamma-glutamyl phosphate reductase (418 aa).

Belongs to the gamma-glutamyl phosphate reductase family.

The protein localises to the cytoplasm. It carries out the reaction L-glutamate 5-semialdehyde + phosphate + NADP(+) = L-glutamyl 5-phosphate + NADPH + H(+). It functions in the pathway amino-acid biosynthesis; L-proline biosynthesis; L-glutamate 5-semialdehyde from L-glutamate: step 2/2. Catalyzes the NADPH-dependent reduction of L-glutamate 5-phosphate into L-glutamate 5-semialdehyde and phosphate. The product spontaneously undergoes cyclization to form 1-pyrroline-5-carboxylate. The sequence is that of Gamma-glutamyl phosphate reductase from Aliivibrio fischeri (strain MJ11) (Vibrio fischeri).